A 396-amino-acid polypeptide reads, in one-letter code: KiSS-1 receptor (396 aa).

The Extracellular segment spans residues 1–43 (MATEATLAPNVTWWAPSNASGCPGCGVNASDDPGSAPRPLDAW). Asn-10, Asn-18, and Asn-28 each carry an N-linked (GlcNAc...) asparagine glycan. The chain crosses the membrane as a helical span at residues 44-66 (LVPLFFATLMLLGLVGNSLVIYV). Residues 67–78 (ICRHKHMQTVTN) lie on the Cytoplasmic side of the membrane. A helical membrane pass occupies residues 79-101 (FYIANLAATDVTFLLCCVPFTAL). Over 102–116 (LYPLPAWVLGDFMCK) the chain is Extracellular. The cysteines at positions 115 and 191 are disulfide-linked. A helical transmembrane segment spans residues 117–138 (FVNYIQQVSVQATCATLTAMSV). Over 139-157 (DRWYVTVFPLRALHRRTPR) the chain is Cytoplasmic. The chain crosses the membrane as a helical span at residues 158 to 180 (LALAVSLSIWVGSAAVSAPVLAL). Residues 181-203 (HRLSPGPRTYCSEAFPSRALERA) lie on the Extracellular side of the membrane. Residues 204–224 (FALYNLLALYLLPLLATCACY) traverse the membrane as a helical segment. Residues 225 to 260 (GAMLRHLGRAAVRPAPTDGALQGQLLAQRAGAVRTK) are Cytoplasmic-facing. Residues 261-283 (VSRLVAAVVLLFAACWGPIQLFL) traverse the membrane as a helical segment. At 284–305 (VLQALGPSGAWHPRSYAAYAVK) the chain is on the extracellular side. Residues 306–330 (IWAHCMSYSNSALNPLLYAFLGSHF) traverse the membrane as a helical segment. Residues 331 to 396 (RQAFCRVCPC…CAQSERTASL (66 aa)) are Cytoplasmic-facing. The tract at residues 349 to 396 (HTSAHSDRAATHTVPHSRAAHPVRIRSPEPGNPVVRSPCAQSERTASL) is disordered. A compositionally biased stretch (polar residues) spans 387–396 (CAQSERTASL).

It belongs to the G-protein coupled receptor 1 family. In terms of tissue distribution, highest level in the heart and 15- and 17-day embryos. Low level in other tissues. Colocalized with gonadotropin-releasing hormone (GnRH) neurons in the hypothalamus.

The protein resides in the cell membrane. Receptor for metastin (kisspeptin-52 or kp-52), a C-terminally amidated peptide of KiSS1. KiSS1 is a metastasis suppressor protein. Activation of the receptor inhibits cell proliferation and cell migration, key characteristics of tumor metastasis. The receptor is essential for normal gonadotropin-released hormone physiology and for puberty. The hypothalamic KiSS1/KISS1R system is a pivotal factor in central regulation of the gonadotropic axis at puberty and in adulthood. Analysis of the transduction pathways activated by the receptor identifies coupling to phospholipase C and intracellular calcium release through pertussis toxin-insensitive G(q) proteins. The protein is KiSS-1 receptor (Kiss1r) of Mus musculus (Mouse).